Reading from the N-terminus, the 180-residue chain is Acireductone dioxygenase (180 aa).

Residues His-97, His-99, Glu-103, and His-141 each coordinate Fe(2+). Ni(2+) is bound by residues His-97, His-99, Glu-103, and His-141.

It belongs to the acireductone dioxygenase (ARD) family. Monomer. It depends on Fe(2+) as a cofactor. Ni(2+) serves as cofactor.

The enzyme catalyses 1,2-dihydroxy-5-(methylsulfanyl)pent-1-en-3-one + O2 = 3-(methylsulfanyl)propanoate + CO + formate + 2 H(+). It catalyses the reaction 1,2-dihydroxy-5-(methylsulfanyl)pent-1-en-3-one + O2 = 4-methylsulfanyl-2-oxobutanoate + formate + 2 H(+). Its pathway is amino-acid biosynthesis; L-methionine biosynthesis via salvage pathway; L-methionine from S-methyl-5-thio-alpha-D-ribose 1-phosphate: step 5/6. Functionally, catalyzes 2 different reactions between oxygen and the acireductone 1,2-dihydroxy-3-keto-5-methylthiopentene (DHK-MTPene) depending upon the metal bound in the active site. Fe-containing acireductone dioxygenase (Fe-ARD) produces formate and 2-keto-4-methylthiobutyrate (KMTB), the alpha-ketoacid precursor of methionine in the methionine recycle pathway. Ni-containing acireductone dioxygenase (Ni-ARD) produces methylthiopropionate, carbon monoxide and formate, and does not lie on the methionine recycle pathway. This chain is Acireductone dioxygenase, found in Cronobacter sakazakii (Enterobacter sakazakii).